A 54-amino-acid chain; its full sequence is ATP synthase F(0) complex subunit 8 (54 aa).

A helical transmembrane segment spans residues 8-24 (PWFSIMLLTWFTFSLLI).

It belongs to the ATPase protein 8 family. As to quaternary structure, component of the ATP synthase complex composed at least of ATP5F1A/subunit alpha, ATP5F1B/subunit beta, ATP5MC1/subunit c (homooctomer), MT-ATP6/subunit a, MT-ATP8/subunit 8, ATP5ME/subunit e, ATP5MF/subunit f, ATP5MG/subunit g, ATP5MK/subunit k, ATP5MJ/subunit j, ATP5F1C/subunit gamma, ATP5F1D/subunit delta, ATP5F1E/subunit epsilon, ATP5PF/subunit F6, ATP5PB/subunit b, ATP5PD/subunit d, ATP5PO/subunit OSCP. ATP synthase complex consists of a soluble F(1) head domain (subunits alpha(3) and beta(3)) - the catalytic core - and a membrane F(0) domain - the membrane proton channel (subunits c, a, 8, e, f, g, k and j). These two domains are linked by a central stalk (subunits gamma, delta, and epsilon) rotating inside the F1 region and a stationary peripheral stalk (subunits F6, b, d, and OSCP).

The protein localises to the mitochondrion membrane. Its function is as follows. Subunit 8, of the mitochondrial membrane ATP synthase complex (F(1)F(0) ATP synthase or Complex V) that produces ATP from ADP in the presence of a proton gradient across the membrane which is generated by electron transport complexes of the respiratory chain. ATP synthase complex consist of a soluble F(1) head domain - the catalytic core - and a membrane F(1) domain - the membrane proton channel. These two domains are linked by a central stalk rotating inside the F(1) region and a stationary peripheral stalk. During catalysis, ATP synthesis in the catalytic domain of F(1) is coupled via a rotary mechanism of the central stalk subunits to proton translocation. In vivo, can only synthesize ATP although its ATP hydrolase activity can be activated artificially in vitro. Part of the complex F(0) domain. The protein is ATP synthase F(0) complex subunit 8 of Gallus gallus (Chicken).